The primary structure comprises 452 residues: DNA primase DnaG (452 aa).

The 77-residue stretch at 172–248 (DTVIIVEGRA…DIDYIARAPP (77 aa)) folds into the Toprim domain. Positions 178, 222, and 224 each coordinate Mg(2+). Residues 289 to 320 (KKQIEQAQVQPSAAPTSPQPQPESTQPTQPIQ) form a disordered region. A compositionally biased stretch (low complexity) spans 294 to 320 (QAQVQPSAAPTSPQPQPESTQPTQPIQ).

Belongs to the archaeal DnaG primase family. In terms of assembly, forms a ternary complex with MCM helicase and DNA. Component of the archaeal exosome complex. Mg(2+) serves as cofactor.

It catalyses the reaction ssDNA + n NTP = ssDNA/pppN(pN)n-1 hybrid + (n-1) diphosphate.. Functionally, RNA polymerase that catalyzes the synthesis of short RNA molecules used as primers for DNA polymerase during DNA replication. Also part of the exosome, which is a complex involved in RNA degradation. Acts as a poly(A)-binding protein that enhances the interaction between heteromeric, adenine-rich transcripts and the exosome. This chain is DNA primase DnaG, found in Caldivirga maquilingensis (strain ATCC 700844 / DSM 13496 / JCM 10307 / IC-167).